Reading from the N-terminus, the 303-residue chain is Protoheme IX farnesyltransferase (303 aa).

A run of 9 helical transmembrane segments spans residues 30–50 (VMSL…STVS), 54–74 (AMIA…LNMW), 101–121 (ALIF…YFAN), 123–143 (ISAV…TIWL), 150–170 (NIVI…TIAT), 178–198 (ITFF…LSLY), 219–241 (STKI…PYAI), 245–262 (GLVF…YNIL), and 279–299 (AKTI…IFLI).

This sequence belongs to the UbiA prenyltransferase family. Protoheme IX farnesyltransferase subfamily.

Its subcellular location is the cell inner membrane. The enzyme catalyses heme b + (2E,6E)-farnesyl diphosphate + H2O = Fe(II)-heme o + diphosphate. It functions in the pathway porphyrin-containing compound metabolism; heme O biosynthesis; heme O from protoheme: step 1/1. Converts heme B (protoheme IX) to heme O by substitution of the vinyl group on carbon 2 of heme B porphyrin ring with a hydroxyethyl farnesyl side group. This chain is Protoheme IX farnesyltransferase, found in Pelagibacter ubique (strain HTCC1062).